We begin with the raw amino-acid sequence, 143 residues long: Putative aryl-alcohol dehydrogenase AAD15 (143 aa).

It belongs to the aldo/keto reductase family. Aldo/keto reductase 2 subfamily.

In terms of biological role, putative aryl-alcohol dehydrogenase. This chain is Putative aryl-alcohol dehydrogenase AAD15 (AAD15), found in Saccharomyces cerevisiae (strain ATCC 204508 / S288c) (Baker's yeast).